We begin with the raw amino-acid sequence, 451 residues long: Interferon regulatory factor 4 (451 aa).

Positions 21–129 (NGKLRQWLID…DPYKVYRIVP (109 aa)) form a DNA-binding region, IRF tryptophan pentad repeat. Phosphoserine; by ROCK2 occurs at positions 447 and 448.

Belongs to the IRF family. As to quaternary structure, interacts with the BATF-JUNB heterodimer. Interacts with BATF (via bZIP domain); the interaction is direct. Interacts with SPIB. Interacts with DEF6. Directly interacts with NLRP3 in the nucleus of Th2 cells; this interaction enhances IRF4 ability to bind to the IL4 promoter and is required for optimal IRF4-dependent IL4 transcription. Interacts with SPI1. Phosphorylation by ROCK2 regulates IL-17 and IL-21 production. As to expression, lymphoid cells.

Its subcellular location is the nucleus. The protein resides in the cytoplasm. Its function is as follows. Transcriptional activator. Binds to the interferon-stimulated response element (ISRE) of the MHC class I promoter. Binds the immunoglobulin lambda light chain enhancer, together with PU.1. Probably plays a role in ISRE-targeted signal transduction mechanisms specific to lymphoid cells. Involved in CD8(+) dendritic cell differentiation by forming a complex with the BATF-JUNB heterodimer in immune cells, leading to recognition of AICE sequence (5'-TGAnTCA/GAAA-3'), an immune-specific regulatory element, followed by cooperative binding of BATF and IRF4 and activation of genes. This is Interferon regulatory factor 4 from Homo sapiens (Human).